Reading from the N-terminus, the 466-residue chain is Sucrose-6-phosphate hydrolase (466 aa).

Residues 38–41, Gln57, 100–101, 159–160, and Glu218 contribute to the substrate site; these read LLND, YS, and RD. The active site involves Asp41.

It localises to the cytoplasm. It catalyses the reaction Hydrolysis of terminal non-reducing beta-D-fructofuranoside residues in beta-D-fructofuranosides.. It functions in the pathway glycan biosynthesis; sucrose metabolism. Hydrolyzes sucrose and sucrose-6P, but fails to hydrolyze any of the phosphorylated isomers of sucrose and other phospho-D-glucosides, including maltose-6'P and trehalose-6P. This Klebsiella pneumoniae protein is Sucrose-6-phosphate hydrolase (scrB).